The sequence spans 84 residues: Acyl carrier protein homolog (84 aa).

The region spanning 4-79 is the Carrier domain; it reads RDILLKIKEI…ELIAEVKHLI (76 aa). At Ser-39 the chain carries O-(pantetheine 4'-phosphoryl)serine.

Post-translationally, 4'-phosphopantetheine is transferred from CoA to a specific serine of the apo-ACP-like protein.

It functions in the pathway lipid metabolism; fatty acid biosynthesis. In terms of biological role, carrier of the growing fatty acid chain in fatty acid biosynthesis. The chain is Acyl carrier protein homolog from Mycoplasma pneumoniae (strain ATCC 29342 / M129 / Subtype 1) (Mycoplasmoides pneumoniae).